The primary structure comprises 360 residues: Phenylalanine--tRNA ligase alpha subunit (360 aa).

Mg(2+) is bound at residue glutamate 260.

It belongs to the class-II aminoacyl-tRNA synthetase family. Phe-tRNA synthetase alpha subunit type 1 subfamily. As to quaternary structure, tetramer of two alpha and two beta subunits. It depends on Mg(2+) as a cofactor.

Its subcellular location is the cytoplasm. It carries out the reaction tRNA(Phe) + L-phenylalanine + ATP = L-phenylalanyl-tRNA(Phe) + AMP + diphosphate + H(+). This is Phenylalanine--tRNA ligase alpha subunit from Bradyrhizobium diazoefficiens (strain JCM 10833 / BCRC 13528 / IAM 13628 / NBRC 14792 / USDA 110).